The primary structure comprises 426 residues: Histidine--tRNA ligase (426 aa).

The protein belongs to the class-II aminoacyl-tRNA synthetase family. As to quaternary structure, homodimer.

It is found in the cytoplasm. The catalysed reaction is tRNA(His) + L-histidine + ATP = L-histidyl-tRNA(His) + AMP + diphosphate + H(+). This chain is Histidine--tRNA ligase, found in Streptococcus equi subsp. equi (strain 4047).